Reading from the N-terminus, the 838-residue chain is Shutoff protein (838 aa).

Positions 1–102 (MEDQHSAASE…EQEEDSPDRY (102 aa)) are disordered. Residues 18–35 (TLPPPPPPPPPPTSPPPS) are compositionally biased toward pro residues. Residues 52 to 65 (TCSSSSSSSASSEC) are compositionally biased toward low complexity. The binding to host EIF4G stretch occupies residues 291–353 (LMQTLLVRRA…ACMVTVQLHC (63 aa)). In terms of domain architecture, RRM spans 356–474 (TFLTSREMVR…SLWTGFDERT (119 aa)). Tyr373 and Tyr690 each carry phosphotyrosine; by host. Positions 693-838 (PHTGEELNTA…QELRRPQRGS (146 aa)) are disordered. Low complexity predominate over residues 701-710 (TAAPSTAHHA). 2 stretches are compositionally biased toward basic and acidic residues: residues 737 to 746 (SYADRVRSEL) and 770 to 787 (HSRD…DQRQ). Positions 813–829 (QALLHQQQQQQEHQPAQ) are enriched in low complexity.

Belongs to the adenoviridae shutoff protein family. In terms of assembly, monomer. Interacts with hexon protein; this interaction allows chaperoning and trimerization of hexon proteins. Interacts (via N-terminus) with host initiation factor EIF4G (via C-terminus). Interacts (via RRM domain) with viral mRNAs that contain the tripartite leader; this interaction allows ribosome shunting and expression of viral late mRNAs. In terms of processing, might be cleaved by the viral protease. Phosphorylated. Tyrosine phosphorylation enhances preferential binding to tripartite leader mRNAs and allows ribosome shunting. Post-translationally, methylated. Asymmetric dimethylation by host PRMT1 of the Arg/Gly-rich region may regulate shutoff protein binding to hexon and promote the capsid assembly in the nucleus.

The protein resides in the host cytoplasm. Its function is as follows. Protein that inhibits host translation while promoting late viral translation by ribosome shunting. Blocks host cap-dependent translation by binding to eIF4G, displacing MKNK1 from cap initiation complexes and preventing EIF4E phosphorylation. Binds to the tripartite leader sequence of viral late mRNAs and recruits host eIF4G, PABPC1/poly-A binding protein and 40S ribosomes subunits on viral mRNAs, allowing ribosome shunting and efficient translation of late viral mRNAs even though conventional translation via ribosome scanning from the cap has been shut off in the host cell. During assembly, acts as a chaperone protein that helps hexon proteins assembly into trimers. The chain is Shutoff protein from Porcine adenovirus A serotype 3 (PAdV-3).